Here is a 428-residue protein sequence, read N- to C-terminus: Probable methanogen homoaconitase large subunit (428 aa).

[4Fe-4S] cluster is bound by residues cysteine 304, cysteine 364, and cysteine 367.

The protein belongs to the aconitase/IPM isomerase family. LeuC type 2 subfamily. As to quaternary structure, heterotetramer of 2 HacA and 2 HacB proteins.

It carries out the reaction (2R)-homocitrate = (2R,3S)-homoisocitrate. It catalyses the reaction (2R)-homocitrate = cis-homoaconitate + H2O. The catalysed reaction is (2R,3S)-homoisocitrate = cis-homoaconitate + H2O. The enzyme catalyses cis-(homo)2aconitate + H2O = (2R,3S)-iso(homo)2citrate. It carries out the reaction cis-(homo)3aconitate + H2O = (2R,3S)-iso(homo)3citrate. Its pathway is organic acid metabolism; 2-oxosuberate biosynthesis. Its function is as follows. Component of a hydro-lyase with broad substrate specificity for cis-unsaturated tricarboxylic acids. Catalyzes both the reversible dehydration of (R)-homocitrate ((R)-2-hydroxybutane-1,2,4-tricarboxylate) to produce cis-homoaconitate ((Z)-but-1-ene-1,2,4-tricarboxylate), and its hydration to homoisocitrate ((1R,2S)-1-hydroxybutane-1,2,4-tricarboxylate). Is also able to hydrate the analogous longer chain substrates cis-homo(2)-aconitate, cis-homo(3)-aconitate. These reactions are part of the biosynthesis pathway of coenzyme B. In Methanothermobacter thermautotrophicus (strain ATCC 29096 / DSM 1053 / JCM 10044 / NBRC 100330 / Delta H) (Methanobacterium thermoautotrophicum), this protein is Probable methanogen homoaconitase large subunit (hacA).